A 161-amino-acid chain; its full sequence is Lipoprotein signal peptidase (161 aa).

3 helical membrane-spanning segments follow: residues 9–29, 63–83, and 88–108; these read ISLLMTFIVLVFDQVSKWLIT, KMLFFYIITIIILIVLVIFYI, and FNLFMQVAISLLFAGALGNFI. Catalysis depends on residues Asp118 and Asp136. The chain crosses the membrane as a helical span at residues 131–151; sequence IFNIADSSLTIGVIFVIITLI.

It belongs to the peptidase A8 family.

It localises to the cell membrane. The enzyme catalyses Release of signal peptides from bacterial membrane prolipoproteins. Hydrolyzes -Xaa-Yaa-Zaa-|-(S,diacylglyceryl)Cys-, in which Xaa is hydrophobic (preferably Leu), and Yaa (Ala or Ser) and Zaa (Gly or Ala) have small, neutral side chains.. It functions in the pathway protein modification; lipoprotein biosynthesis (signal peptide cleavage). Functionally, this protein specifically catalyzes the removal of signal peptides from prolipoproteins. In Staphylococcus epidermidis (strain ATCC 35984 / DSM 28319 / BCRC 17069 / CCUG 31568 / BM 3577 / RP62A), this protein is Lipoprotein signal peptidase.